The following is a 356-amino-acid chain: Peptide chain release factor 1 (356 aa).

Glutamine 233 carries the post-translational modification N5-methylglutamine.

This sequence belongs to the prokaryotic/mitochondrial release factor family. Post-translationally, methylated by PrmC. Methylation increases the termination efficiency of RF1.

The protein resides in the cytoplasm. Its function is as follows. Peptide chain release factor 1 directs the termination of translation in response to the peptide chain termination codons UAG and UAA. The chain is Peptide chain release factor 1 from Syntrophotalea carbinolica (strain DSM 2380 / NBRC 103641 / GraBd1) (Pelobacter carbinolicus).